Consider the following 225-residue polypeptide: Deoxyribose-phosphate aldolase (225 aa).

Asp96 (proton donor/acceptor) is an active-site residue. Catalysis depends on Lys157, which acts as the Schiff-base intermediate with acetaldehyde. Lys185 functions as the Proton donor/acceptor in the catalytic mechanism.

It belongs to the DeoC/FbaB aldolase family. DeoC type 1 subfamily.

Its subcellular location is the cytoplasm. The catalysed reaction is 2-deoxy-D-ribose 5-phosphate = D-glyceraldehyde 3-phosphate + acetaldehyde. It participates in carbohydrate degradation; 2-deoxy-D-ribose 1-phosphate degradation; D-glyceraldehyde 3-phosphate and acetaldehyde from 2-deoxy-alpha-D-ribose 1-phosphate: step 2/2. In terms of biological role, catalyzes a reversible aldol reaction between acetaldehyde and D-glyceraldehyde 3-phosphate to generate 2-deoxy-D-ribose 5-phosphate. This chain is Deoxyribose-phosphate aldolase, found in Microcystis aeruginosa (strain NIES-843 / IAM M-2473).